The chain runs to 248 residues: 3-deoxy-manno-octulosonate cytidylyltransferase (248 aa).

It belongs to the KdsB family.

The protein localises to the cytoplasm. It carries out the reaction 3-deoxy-alpha-D-manno-oct-2-ulosonate + CTP = CMP-3-deoxy-beta-D-manno-octulosonate + diphosphate. It functions in the pathway nucleotide-sugar biosynthesis; CMP-3-deoxy-D-manno-octulosonate biosynthesis; CMP-3-deoxy-D-manno-octulosonate from 3-deoxy-D-manno-octulosonate and CTP: step 1/1. It participates in bacterial outer membrane biogenesis; lipopolysaccharide biosynthesis. Its function is as follows. Activates KDO (a required 8-carbon sugar) for incorporation into bacterial lipopolysaccharide in Gram-negative bacteria. The sequence is that of 3-deoxy-manno-octulosonate cytidylyltransferase from Escherichia fergusonii (strain ATCC 35469 / DSM 13698 / CCUG 18766 / IAM 14443 / JCM 21226 / LMG 7866 / NBRC 102419 / NCTC 12128 / CDC 0568-73).